Consider the following 141-residue polypeptide: Hemoglobin subunit alpha-D/D' (141 aa).

Positions 1–141 constitute a Globin domain; the sequence is MLTADDKKLI…VAAVLAEKYR (141 aa). The heme b site is built by histidine 58 and histidine 87.

Belongs to the globin family. In terms of assembly, heterotetramer of two alpha-D chains and two beta chains. As to expression, red blood cells.

Its function is as follows. Involved in oxygen transport from the lung to the various peripheral tissues. This chain is Hemoglobin subunit alpha-D/D' (HBAD), found in Gyps rueppelli (Rueppell's griffon).